The primary structure comprises 247 residues: UPF0612 protein P20C8.01c (247 aa).

2 coiled-coil regions span residues 27 to 63 (IKRY…MKYE) and 138 to 225 (DTVQ…DARS).

Belongs to the UPF0612 family.

It is found in the cytoplasm. The chain is UPF0612 protein P20C8.01c from Schizosaccharomyces pombe (strain 972 / ATCC 24843) (Fission yeast).